The chain runs to 171 residues: 3-hydroxydecanoyl-[acyl-carrier-protein] dehydratase (171 aa).

Residue H70 is part of the active site.

This sequence belongs to the thioester dehydratase family. FabA subfamily. As to quaternary structure, homodimer.

It is found in the cytoplasm. It catalyses the reaction a (3R)-hydroxyacyl-[ACP] = a (2E)-enoyl-[ACP] + H2O. The catalysed reaction is (3R)-hydroxydecanoyl-[ACP] = (2E)-decenoyl-[ACP] + H2O. It carries out the reaction (2E)-decenoyl-[ACP] = (3Z)-decenoyl-[ACP]. The protein operates within lipid metabolism; fatty acid biosynthesis. Functionally, necessary for the introduction of cis unsaturation into fatty acids. Catalyzes the dehydration of (3R)-3-hydroxydecanoyl-ACP to E-(2)-decenoyl-ACP and then its isomerization to Z-(3)-decenoyl-ACP. Can catalyze the dehydratase reaction for beta-hydroxyacyl-ACPs with saturated chain lengths up to 16:0, being most active on intermediate chain length. The sequence is that of 3-hydroxydecanoyl-[acyl-carrier-protein] dehydratase from Pseudomonas syringae pv. syringae (strain B728a).